The chain runs to 692 residues: Elongation factor G (692 aa).

The tr-type G domain occupies 8-282; the sequence is EKTRNIGIMA…GVVDYLPSPV (275 aa). GTP-binding positions include 17–24, 81–85, and 135–138; these read AHIDAGKT, DTPGH, and NKMD.

This sequence belongs to the TRAFAC class translation factor GTPase superfamily. Classic translation factor GTPase family. EF-G/EF-2 subfamily.

Its subcellular location is the cytoplasm. Catalyzes the GTP-dependent ribosomal translocation step during translation elongation. During this step, the ribosome changes from the pre-translocational (PRE) to the post-translocational (POST) state as the newly formed A-site-bound peptidyl-tRNA and P-site-bound deacylated tRNA move to the P and E sites, respectively. Catalyzes the coordinated movement of the two tRNA molecules, the mRNA and conformational changes in the ribosome. The protein is Elongation factor G of Geobacillus kaustophilus (strain HTA426).